The chain runs to 148 residues: Natriuretic peptide BF131 (148 aa).

Residues methionine 1 to glycine 27 form the signal peptide. A propeptide spanning residues lysine 28–glutamine 83 is cleaved from the precursor. Disordered regions lie at residues leucine 54 to glutamine 83 and threonine 105 to alanine 127. Positions alanine 63–glutamine 83 are enriched in basic and acidic residues. Cysteine 94 and cysteine 110 are joined by a disulfide. A propeptide spanning residues alanine 130–alanine 148 is cleaved from the precursor.

The protein belongs to the natriuretic peptide family. In terms of tissue distribution, expressed by the venom gland.

It is found in the secreted. Natriuretic peptide that dose-dependently induces the rapid relaxation of rat aortic strips phenylephrine-precontracted. Acts by stimulating cGMP production in a dose-dependent manner (by probably activating NPR1 and/or NPR2). May also show potent hypotensive effects. This is Natriuretic peptide BF131 from Bungarus flaviceps flaviceps (Red-headed krait).